The sequence spans 137 residues: Probable histone H2AXa (137 aa).

Positions 1 to 10 are enriched in gly residues; sequence MSSSQGGGGR. A disordered region spans residues 1–21; it reads MSSSQGGGGRGKAKTTKAVSR. Ser134 carries the post-translational modification Phosphoserine; by ATM and ATR. The [ST]-Q motif signature appears at 134 to 135; it reads SQ.

The protein belongs to the histone H2A family. As to quaternary structure, the nucleosome is a histone octamer containing two molecules each of H2A, H2B, H3 and H4 assembled in one H3-H4 heterotetramer and two H2A-H2B heterodimers. The octamer wraps approximately 147 bp of DNA. Interacts with numerous proteins required for DNA damage signaling and repair when phosphorylated on Ser-134. Post-translationally, phosphorylated to form H2AXS139ph (gamma-H2AX) in response to DNA double strand breaks (DSBs) generated by exogenous genotoxic agents and by stalled replication forks, and may also occur during meiotic recombination events. Phosphorylation can extend up to several thousand nucleosomes from the actual site of the DSB and may mark the surrounding chromatin for recruitment of proteins required for DNA damage signaling and repair. Widespread phosphorylation may also serve to amplify the damage signal or aid repair of persistent lesions. H2AXS139ph in response to ionizing radiation is mediated by ATM while defects in DNA replication induce H2AXS139ph subsequent to activation of ATR. Dephosphorylation of H2AXS139ph by PP2A is required for DNA DSB repair.

The protein resides in the nucleus. The protein localises to the chromosome. In terms of biological role, variant histone H2A which replaces conventional H2A in a subset of nucleosomes. Nucleosomes wrap and compact DNA into chromatin, limiting DNA accessibility to the cellular machineries which require DNA as a template. Histones thereby play a central role in transcription regulation, DNA repair, DNA replication and chromosomal stability. DNA accessibility is regulated via a complex set of post-translational modifications of histones, also called histone code, and nucleosome remodeling. Required for checkpoint-mediated arrest of cell cycle progression in response to low doses of ionizing radiation and for efficient repair of DNA double strand breaks (DSBs) specifically when modified by C-terminal phosphorylation. The sequence is that of Probable histone H2AXa from Oryza sativa subsp. indica (Rice).